Reading from the N-terminus, the 668-residue chain is DNA ligase (668 aa).

Residues 34–38, 83–84, and glutamate 114 contribute to the NAD(+) site; these read DTEYD and SL. Catalysis depends on lysine 116, which acts as the N6-AMP-lysine intermediate. 4 residues coordinate NAD(+): arginine 137, glutamate 171, lysine 286, and lysine 310. Residues cysteine 404, cysteine 407, cysteine 422, and cysteine 427 each contribute to the Zn(2+) site. The 81-residue stretch at 588–668 folds into the BRCT domain; sequence NSDSIIANKS…FFDLLKSEKG (81 aa).

The protein belongs to the NAD-dependent DNA ligase family. LigA subfamily. The cofactor is Mg(2+). Requires Mn(2+) as cofactor.

It carries out the reaction NAD(+) + (deoxyribonucleotide)n-3'-hydroxyl + 5'-phospho-(deoxyribonucleotide)m = (deoxyribonucleotide)n+m + AMP + beta-nicotinamide D-nucleotide.. Its function is as follows. DNA ligase that catalyzes the formation of phosphodiester linkages between 5'-phosphoryl and 3'-hydroxyl groups in double-stranded DNA using NAD as a coenzyme and as the energy source for the reaction. It is essential for DNA replication and repair of damaged DNA. The polypeptide is DNA ligase (Mycoplasma mycoides subsp. mycoides SC (strain CCUG 32753 / NCTC 10114 / PG1)).